A 205-amino-acid polypeptide reads, in one-letter code: Holliday junction branch migration complex subunit RuvA (205 aa).

The domain I stretch occupies residues methionine 1–leucine 65. The domain II stretch occupies residues aspartate 66–serine 144. The flexible linker stretch occupies residues leucine 145 to asparagine 153. The segment at threonine 154–lysine 205 is domain III.

The protein belongs to the RuvA family. As to quaternary structure, homotetramer. Forms an RuvA(8)-RuvB(12)-Holliday junction (HJ) complex. HJ DNA is sandwiched between 2 RuvA tetramers; dsDNA enters through RuvA and exits via RuvB. An RuvB hexamer assembles on each DNA strand where it exits the tetramer. Each RuvB hexamer is contacted by two RuvA subunits (via domain III) on 2 adjacent RuvB subunits; this complex drives branch migration. In the full resolvosome a probable DNA-RuvA(4)-RuvB(12)-RuvC(2) complex forms which resolves the HJ.

Its subcellular location is the cytoplasm. In terms of biological role, the RuvA-RuvB-RuvC complex processes Holliday junction (HJ) DNA during genetic recombination and DNA repair, while the RuvA-RuvB complex plays an important role in the rescue of blocked DNA replication forks via replication fork reversal (RFR). RuvA specifically binds to HJ cruciform DNA, conferring on it an open structure. The RuvB hexamer acts as an ATP-dependent pump, pulling dsDNA into and through the RuvAB complex. HJ branch migration allows RuvC to scan DNA until it finds its consensus sequence, where it cleaves and resolves the cruciform DNA. This is Holliday junction branch migration complex subunit RuvA from Orientia tsutsugamushi (strain Boryong) (Rickettsia tsutsugamushi).